Reading from the N-terminus, the 270-residue chain is Glutamate 5-kinase (270 aa).

K15 is an ATP binding site. 3 residues coordinate substrate: S55, D142, and N158. Residues S178–D179 and T220–K226 each bind ATP.

The protein belongs to the glutamate 5-kinase family.

It is found in the cytoplasm. The enzyme catalyses L-glutamate + ATP = L-glutamyl 5-phosphate + ADP. The protein operates within amino-acid biosynthesis; L-proline biosynthesis; L-glutamate 5-semialdehyde from L-glutamate: step 1/2. In terms of biological role, catalyzes the transfer of a phosphate group to glutamate to form L-glutamate 5-phosphate. The polypeptide is Glutamate 5-kinase (Streptococcus uberis (strain ATCC BAA-854 / 0140J)).